The chain runs to 102 residues: Transposable element activator uncharacterized 12 kDa protein (102 aa).

The segment covering His24–His51 has biased composition (basic residues). Positions His24–Gly55 are disordered.

In Zea mays (Maize), this protein is Transposable element activator uncharacterized 12 kDa protein.